The sequence spans 738 residues: Catalase-peroxidase (738 aa).

Residues 1–16 (MSENHDAIVTDAKTEE) show a composition bias toward basic and acidic residues. Positions 1–37 (MSENHDAIVTDAKTEEAGGCPVAHGRAPHPTQGGGNR) are disordered. Residues 108 to 231 (WHSAGTYRIS…LGAVQMGLIY (124 aa)) constitute a cross-link (tryptophyl-tyrosyl-methioninium (Trp-Tyr) (with M-257)). Histidine 109 functions as the Proton acceptor in the catalytic mechanism. Residues 231–257 (YVNPEGPNGNPDPIAAARDIRETFGRM) constitute a cross-link (tryptophyl-tyrosyl-methioninium (Tyr-Met) (with W-108)). Residue histidine 272 participates in heme b binding.

It belongs to the peroxidase family. Peroxidase/catalase subfamily. In terms of assembly, homodimer or homotetramer. Heme b serves as cofactor. In terms of processing, formation of the three residue Trp-Tyr-Met cross-link is important for the catalase, but not the peroxidase activity of the enzyme.

It catalyses the reaction H2O2 + AH2 = A + 2 H2O. It carries out the reaction 2 H2O2 = O2 + 2 H2O. Bifunctional enzyme with both catalase and broad-spectrum peroxidase activity. This is Catalase-peroxidase from Streptomyces ambofaciens.